Consider the following 419-residue polypeptide: L-rhamnose isomerase (419 aa).

Residues His262, Asp294, and Asp296 each coordinate Mn(2+).

It belongs to the rhamnose isomerase family. As to quaternary structure, homotetramer. Mn(2+) is required as a cofactor.

The protein localises to the cytoplasm. It carries out the reaction L-rhamnopyranose = L-rhamnulose. The protein operates within carbohydrate degradation; L-rhamnose degradation; glycerone phosphate from L-rhamnose: step 1/3. Functionally, catalyzes the interconversion of L-rhamnose and L-rhamnulose. The chain is L-rhamnose isomerase from Escherichia coli O81 (strain ED1a).